We begin with the raw amino-acid sequence, 455 residues long: 23S rRNA (uracil(1939)-C(5))-methyltransferase RlmD (455 aa).

One can recognise a TRAM domain in the interval 12 to 70; sequence SKQLSAKLSLSVTQLDHLGAGIAQHQGKIVFIPGVLPGETATVQFVEQKKSYAKAKLIS. C83, C89, C92, and C174 together coordinate [4Fe-4S] cluster. S-adenosyl-L-methionine is bound by residues Q288, F317, N322, E338, D365, and D385. C411 serves as the catalytic Nucleophile.

Belongs to the class I-like SAM-binding methyltransferase superfamily. RNA M5U methyltransferase family. RlmD subfamily.

It catalyses the reaction uridine(1939) in 23S rRNA + S-adenosyl-L-methionine = 5-methyluridine(1939) in 23S rRNA + S-adenosyl-L-homocysteine + H(+). Its function is as follows. Catalyzes the formation of 5-methyl-uridine at position 1939 (m5U1939) in 23S rRNA. The chain is 23S rRNA (uracil(1939)-C(5))-methyltransferase RlmD from Shewanella frigidimarina (strain NCIMB 400).